The following is a 309-amino-acid chain: Protein FdhE homolog (309 aa).

It belongs to the FdhE family.

It is found in the cytoplasm. Functionally, necessary for formate dehydrogenase activity. The polypeptide is Protein FdhE homolog (Citrobacter koseri (strain ATCC BAA-895 / CDC 4225-83 / SGSC4696)).